The sequence spans 268 residues: Ribosomal RNA small subunit methyltransferase A (268 aa).

S-adenosyl-L-methionine is bound by residues Asn17, Leu19, Gly44, Glu65, Asp89, and Asn110.

Belongs to the class I-like SAM-binding methyltransferase superfamily. rRNA adenine N(6)-methyltransferase family. RsmA subfamily.

The protein resides in the cytoplasm. It carries out the reaction adenosine(1518)/adenosine(1519) in 16S rRNA + 4 S-adenosyl-L-methionine = N(6)-dimethyladenosine(1518)/N(6)-dimethyladenosine(1519) in 16S rRNA + 4 S-adenosyl-L-homocysteine + 4 H(+). In terms of biological role, specifically dimethylates two adjacent adenosines (A1518 and A1519) in the loop of a conserved hairpin near the 3'-end of 16S rRNA in the 30S particle. May play a critical role in biogenesis of 30S subunits. The polypeptide is Ribosomal RNA small subunit methyltransferase A (Acidithiobacillus ferrooxidans (strain ATCC 53993 / BNL-5-31) (Leptospirillum ferrooxidans (ATCC 53993))).